The chain runs to 190 residues: MKLAYFSSLLPLALAAPASVVDPREPKEDITDRYLFSTPLPTFLEYREKENPDSLDWTSDGCTHASNNPFGFPFEPACQRHDFGYRNYQAQTRFESDSRYRIDLNFYNDMIFQCTDVSALRSCHGLADVYYAGVRMFGGFAKRDEMGAVVASATDPKESAEDLIAVYYTALQEYHQAVKADQADGLLPRL.

Positions Met1–Ala15 are cleaved as a signal peptide. Cysteines 62 and 78 form a disulfide. Ca(2+) is bound at residue Ala65. His81 is an active-site residue. Ca(2+) is bound at residue Asp82.

Belongs to the phospholipase A2 family. It depends on Ca(2+) as a cofactor.

The protein localises to the lipid droplet. The protein resides in the secreted. The enzyme catalyses a 1,2-diacyl-sn-glycero-3-phosphocholine + H2O = a 1-acyl-sn-glycero-3-phosphocholine + a fatty acid + H(+). In terms of biological role, secretory phospholipase that catalyzes the calcium-dependent hydrolysis of the 2-acyl groups in 3-sn-phosphoglycerides. Increases the ability to utilize insect-derived nutrients and lipids, and promotes lipid dropplets accumulation. Plays a role in virulence, including more efficient penetration of the insect cuticle and evasion of host immune response by repressing the expression of host immunity genes. The sequence is that of Secretory phospholipase A2 from Beauveria bassiana (strain ARSEF 2860) (White muscardine disease fungus).